The sequence spans 211 residues: Uridine kinase (211 aa).

An ATP-binding site is contributed by Gly-15–Thr-22.

Belongs to the uridine kinase family.

Its subcellular location is the cytoplasm. It catalyses the reaction uridine + ATP = UMP + ADP + H(+). The catalysed reaction is cytidine + ATP = CMP + ADP + H(+). It functions in the pathway pyrimidine metabolism; CTP biosynthesis via salvage pathway; CTP from cytidine: step 1/3. It participates in pyrimidine metabolism; UMP biosynthesis via salvage pathway; UMP from uridine: step 1/1. The polypeptide is Uridine kinase (Lactobacillus helveticus (strain DPC 4571)).